We begin with the raw amino-acid sequence, 131 residues long: Capsid protein (131 aa).

Ca(2+) is bound by residues Gln2 and Tyr131.

The protein belongs to the Leviviricetes capsid protein family. In terms of assembly, homodimer. The capsid proteins form dimers that assemble by group of 5. Twelve such pentamers are linked together with free dimers. The homodimers binds to the viral RNA via an operator hairpin, but also to many other RNA sequences in the viral genome; this interaction probably shifts the virus from the replicative to the assembly phase and ensures specific encapsidation of the viral genome.

It localises to the virion. Its function is as follows. Capsid protein self-assembles to form an icosahedral capsid with a T=3 symmetry, about 26 nm in diameter, and consisting of 89 capsid proteins dimers (178 capsid proteins). Involved in viral genome encapsidation through the interaction between a capsid protein dimer and the multiple packaging signals present in the RNA genome. The capsid also contains 1 copy of the A2 maturation protein. Acts as a translational repressor of viral replicase synthesis late in infection. This latter function is the result of capsid protein interaction with an RNA hairpin which contains the replicase ribosome-binding site. This chain is Capsid protein, found in Pseudomonas phage PRR1 (Bacteriophage PRR1).